The chain runs to 322 residues: Phospho-N-acetylmuramoyl-pentapeptide-transferase (322 aa).

10 helical membrane-spanning segments follow: residues 9-29 (IALVSSLVLTVIFLPVLINFM), 54-74 (TMGGTIFVIAAVISVIWVAAW), 82-102 (VWILVISLLGYGIIGFLDDGI), 122-142 (IIIAVVIVLIASSDHFQFGLY), 145-165 (FAGVVHSIALFTIFIIFWLVG), 176-196 (LDGLATGLSIVAYGTYAYIAF), 200-220 (NFAVLAFCMSVIGGLIAFFIF), 227-247 (IFMGDAGSLALGGGLATVSIM), 255-275 (LLIGIVFVCETASVILQVISF), and 302-322 (VDIVFWLVGLICSILYLAIWG).

This sequence belongs to the glycosyltransferase 4 family. MraY subfamily. Requires Mg(2+) as cofactor.

The protein resides in the cell membrane. It catalyses the reaction UDP-N-acetyl-alpha-D-muramoyl-L-alanyl-gamma-D-glutamyl-L-lysyl-D-alanyl-D-alanine + di-trans,octa-cis-undecaprenyl phosphate = Mur2Ac(oyl-L-Ala-gamma-D-Glu-L-Lys-D-Ala-D-Ala)-di-trans,octa-cis-undecaprenyl diphosphate + UMP. It functions in the pathway cell wall biogenesis; peptidoglycan biosynthesis. In terms of biological role, catalyzes the initial step of the lipid cycle reactions in the biosynthesis of the cell wall peptidoglycan: transfers peptidoglycan precursor phospho-MurNAc-pentapeptide from UDP-MurNAc-pentapeptide onto the lipid carrier undecaprenyl phosphate, yielding undecaprenyl-pyrophosphoryl-MurNAc-pentapeptide, known as lipid I. The chain is Phospho-N-acetylmuramoyl-pentapeptide-transferase from Lactobacillus acidophilus (strain ATCC 700396 / NCK56 / N2 / NCFM).